Reading from the N-terminus, the 103-residue chain is Cytotoxin-like protein TA-BMBGT3 (103 aa).

The first 21 residues, 1 to 21, serve as a signal peptide directing secretion; it reads MKTLLLTLVVVTIICLDLGYT. 5 disulfides stabilise this stretch: cysteine 24-cysteine 45, cysteine 27-cysteine 37, cysteine 38-cysteine 72, cysteine 76-cysteine 90, and cysteine 91-cysteine 96.

The protein belongs to the three-finger toxin family. Ancestral subfamily. Orphan group XVII sub-subfamily. Expressed by the venom gland.

Its subcellular location is the secreted. This Bungarus multicinctus (Many-banded krait) protein is Cytotoxin-like protein TA-BMBGT3.